The chain runs to 116 residues: Large ribosomal subunit protein bL19 (116 aa).

This sequence belongs to the bacterial ribosomal protein bL19 family.

In terms of biological role, this protein is located at the 30S-50S ribosomal subunit interface and may play a role in the structure and function of the aminoacyl-tRNA binding site. This is Large ribosomal subunit protein bL19 from Pseudomonas fluorescens (strain ATCC BAA-477 / NRRL B-23932 / Pf-5).